A 130-amino-acid chain; its full sequence is MRLFTGIVFCSLVMGVTSESWRSFFKEALQGVGDMGRAYWDIMISNHQNSNRYLYARGNYDAAQRGPGGVWAAKLISRSRVYLQGLIDCYLFGNSSTVLEDSKSNEKAEEWGRSGKDPDRFRPDGLPKKY.

Positions 1–18 are cleaved as a signal peptide; sequence MRLFTGIVFCSLVMGVTS. A glycan (N-linked (GlcNAc...) asparagine; partial) is linked at Asn94. The tract at residues 101–130 is disordered; the sequence is DSKSNEKAEEWGRSGKDPDRFRPDGLPKKY.

It belongs to the SAA family. Apolipoprotein of the HDL complex. As to expression, expressed by the liver; secreted in plasma.

It localises to the secreted. Major acute phase reactant. The sequence is that of Serum amyloid A-4 protein from Homo sapiens (Human).